Reading from the N-terminus, the 256-residue chain is Imidazole glycerol phosphate synthase subunit HisF (256 aa).

Residues Asp-12 and Asp-131 contribute to the active site.

This sequence belongs to the HisA/HisF family. Heterodimer of HisH and HisF.

It is found in the cytoplasm. The enzyme catalyses 5-[(5-phospho-1-deoxy-D-ribulos-1-ylimino)methylamino]-1-(5-phospho-beta-D-ribosyl)imidazole-4-carboxamide + L-glutamine = D-erythro-1-(imidazol-4-yl)glycerol 3-phosphate + 5-amino-1-(5-phospho-beta-D-ribosyl)imidazole-4-carboxamide + L-glutamate + H(+). It functions in the pathway amino-acid biosynthesis; L-histidine biosynthesis; L-histidine from 5-phospho-alpha-D-ribose 1-diphosphate: step 5/9. Its function is as follows. IGPS catalyzes the conversion of PRFAR and glutamine to IGP, AICAR and glutamate. The HisF subunit catalyzes the cyclization activity that produces IGP and AICAR from PRFAR using the ammonia provided by the HisH subunit. The sequence is that of Imidazole glycerol phosphate synthase subunit HisF from Thermobifida fusca (strain YX).